The chain runs to 878 residues: MASLRLPRANPLAFTRWPVTVITAIVYLALLIPLLVVHHVVPSAPSSPPSGLNISEAWADLQVLTNGFHPYNSRRNDVIHSWLLRRINEILDSTPLEQEYRALDEEKPDVFVFDDVYSNLTTYGGTLKDADLGVYFEGTNVIVYIRGWEDDTEHWWEAPNGVPTSRGGVLVNSHYDSVSTGFGATDDGVGVVTCLQLVKYFTTPGHAPRRGLVVLFNNGEEDFLNGARVYSQHPISKLPHTFLNLEGAGAGGRATLFRSSDFEVTGPYMRSPHPFGSVLSANGFDTGLIASQTDYVIFQGNMGLRGLDVAFMEPRARYHTNQDDTRHTSKDSVWHMLSAAVATTEGLVSDSTDRFDGAPNTDGGVPSGSGSQAVWFDLFGSTFVLFQLHTLFALLVTLLIVGPLTLLFTSIALTKADKMYLFRSSAKSEDRLDVVPLQGLRGFFRFPFLFGIPTVVTVGLAYLVTKVNPYIIHSSAYAVWSMMVAAWVFLAWFVSRVADFARPSAFHRIYTLTWMYVLSWVSAVIATVYANQRGLAGGYFIFFFHAGIFLATWISYLELFALPSKTEYANQLRSVSGRASGHGSRRGTTSGEDDGEEAEEEPTESTSLLGSGQRTTFANYVRVGGDNHAVAEEEVIDPNVYGREQAWSYALPKWTWGLQLLLTAPITLIMVGPLALLTISAISQTGQDGGHPLFAYVAIAIFTTIMLTPLLPFIHRYTYHVPLFLLAVFLGTLIYNLVAFPFSDSNRLKLYYVQEVDLDTGVNSATFAGLSPFVKDVSQELPSAAGQTVSCEWHTKRRNLLSCSWEGIAPQPVEGDHPMKDWGALKGNVVCLWSDHNQPGVLPALDEAIQFLPVWAAVTKGSDGLVEGRRAFEIGNDD.

The Cytoplasmic segment spans residues 1-16 (MASLRLPRANPLAFTR). Residues 17 to 37 (WPVTVITAIVYLALLIPLLVV) form a helical membrane-spanning segment. The Vacuolar portion of the chain corresponds to 38-390 (HHVVPSAPSS…STFVLFQLHT (353 aa)). N-linked (GlcNAc...) asparagine glycans are attached at residues Asn-53 and Asn-119. Residues His-174 and Asp-186 each contribute to the Zn(2+) site. Glu-220 serves as the catalytic Proton acceptor. The Zn(2+) site is built by Glu-221, Glu-246, and His-319. The helical transmembrane segment at 391–411 (LFALLVTLLIVGPLTLLFTSI) threads the bilayer. The Cytoplasmic segment spans residues 412–442 (ALTKADKMYLFRSSAKSEDRLDVVPLQGLRG). Residues 443 to 463 (FFRFPFLFGIPTVVTVGLAYL) traverse the membrane as a helical segment. At 464-473 (VTKVNPYIIH) the chain is on the vacuolar side. A helical membrane pass occupies residues 474–494 (SSAYAVWSMMVAAWVFLAWFV). Residues 495–508 (SRVADFARPSAFHR) are Cytoplasmic-facing. A helical membrane pass occupies residues 509-529 (IYTLTWMYVLSWVSAVIATVY). Topologically, residues 530–533 (ANQR) are vacuolar. The helical transmembrane segment at 534-554 (GLAGGYFIFFFHAGIFLATWI) threads the bilayer. Residues 555-659 (SYLELFALPS…ALPKWTWGLQ (105 aa)) lie on the Cytoplasmic side of the membrane. The span at 577–590 (GRASGHGSRRGTTS) shows a compositional bias: low complexity. The segment at 577–611 (GRASGHGSRRGTTSGEDDGEEAEEEPTESTSLLGS) is disordered. The span at 591 to 603 (GEDDGEEAEEEPT) shows a compositional bias: acidic residues. The chain crosses the membrane as a helical span at residues 660–680 (LLLTAPITLIMVGPLALLTIS). Residues 681-693 (AISQTGQDGGHPL) are Vacuolar-facing. A helical membrane pass occupies residues 694–714 (FAYVAIAIFTTIMLTPLLPFI). The Cytoplasmic portion of the chain corresponds to 715–721 (HRYTYHV). Residues 722–742 (PLFLLAVFLGTLIYNLVAFPF) traverse the membrane as a helical segment. The Vacuolar segment spans residues 743–878 (SDSNRLKLYY…RRAFEIGNDD (136 aa)).

Belongs to the peptidase M28 family. It depends on Zn(2+) as a cofactor.

Its subcellular location is the vacuole membrane. In terms of biological role, may be involved in vacuolar sorting and osmoregulation. This Aspergillus flavus (strain ATCC 200026 / FGSC A1120 / IAM 13836 / NRRL 3357 / JCM 12722 / SRRC 167) protein is Vacuolar membrane protease.